Consider the following 777-residue polypeptide: Polyribonucleotide nucleotidyltransferase (777 aa).

Mg(2+) contacts are provided by D494 and D500. The KH domain maps to P561–I620. Positions G630–R699 constitute an S1 motif domain. Residues T703–G777 are disordered. The span at G718–D727 shows a compositional bias: gly residues. Basic and acidic residues-rich tracts occupy residues R728–P761 and N768–G777.

The protein belongs to the polyribonucleotide nucleotidyltransferase family. It depends on Mg(2+) as a cofactor.

It localises to the cytoplasm. It carries out the reaction RNA(n+1) + phosphate = RNA(n) + a ribonucleoside 5'-diphosphate. Involved in mRNA degradation. Catalyzes the phosphorolysis of single-stranded polyribonucleotides processively in the 3'- to 5'-direction. The chain is Polyribonucleotide nucleotidyltransferase from Herpetosiphon aurantiacus (strain ATCC 23779 / DSM 785 / 114-95).